The sequence spans 214 residues: uncharacterized protein (214 aa).

CBS domains are found at residues 7–65 and 69–129; these read MDKN…KKPI and MRPV…EIPV.

This is an uncharacterized protein from Methanocaldococcus jannaschii (strain ATCC 43067 / DSM 2661 / JAL-1 / JCM 10045 / NBRC 100440) (Methanococcus jannaschii).